A 219-amino-acid polypeptide reads, in one-letter code: Probable nicotinate-nucleotide adenylyltransferase (219 aa).

This sequence belongs to the NadD family.

The catalysed reaction is nicotinate beta-D-ribonucleotide + ATP + H(+) = deamido-NAD(+) + diphosphate. It participates in cofactor biosynthesis; NAD(+) biosynthesis; deamido-NAD(+) from nicotinate D-ribonucleotide: step 1/1. Catalyzes the reversible adenylation of nicotinate mononucleotide (NaMN) to nicotinic acid adenine dinucleotide (NaAD). This is Probable nicotinate-nucleotide adenylyltransferase from Pseudomonas putida (strain W619).